The following is a 444-amino-acid chain: uncharacterized protein (444 aa).

An HTH gntR-type domain is found at 1–69 (MEKYMSLLTR…PKSGYYIVKK (69 aa)). The segment at residues 29 to 48 (IRQLSARYQVSKSTVIRALQ) is a DNA-binding region (H-T-H motif). Lys-286 carries the N6-(pyridoxal phosphate)lysine modification.

This sequence in the C-terminal section; belongs to the class-I pyridoxal-phosphate-dependent aminotransferase family. Pyridoxal 5'-phosphate is required as a cofactor.

This is an uncharacterized protein from Bacillus subtilis (strain 168).